The chain runs to 668 residues: Neurexin-3-beta (668 aa).

Residues 1 to 35 (MHLRTNPSICPGRRPAWTLWMCSLFWGCIVSSVWS) form the signal peptide. The Extracellular segment spans residues 36–593 (SSNVASSASS…EVVRESSSTT (558 aa)). Positions 84–284 (ATYIFGKSGG…NPNIKINGSV (201 aa)) constitute a Laminin G-like domain. The tract at residues 510-529 (TASSSTGMVPKLPAGKMNNR) is disordered. A helical membrane pass occupies residues 594-614 (GMVVGIVAAAALCILILLYAM). Topologically, residues 615–668 (YKYRNRDEGSYQVDETRNYISNSAQSNGTLMKEKQQSSKSGHKKQKNKDKEYYV) are cytoplasmic. A disordered region spans residues 636-668 (NSAQSNGTLMKEKQQSSKSGHKKQKNKDKEYYV).

The protein belongs to the neurexin family. Post-translationally, processed by alpha-secretase leading to the formation of an extracellular soluble protein as well as a C-terminal membrane-embedded fragment (CTF). Proteolysis of these CTFs by gamma-secretase releases intracellular domains (ICDs) and extracellular peptides. In terms of tissue distribution, brain and arteries (at protein level).

It is found in the membrane. Its function is as follows. Neuronal cell surface protein that may be involved in cell recognition and cell adhesion. Plays a role in angiogenesis. The sequence is that of Neurexin-3-beta (NRXN3) from Gallus gallus (Chicken).